The primary structure comprises 111 residues: Resistin-like alpha (111 aa).

The first 23 residues, 1-23 (MKTTTCSLLICISLLQLMVPVNT), serve as a signal peptide directing secretion. Cystine bridges form between Cys-55/Cys-108, Cys-67/Cys-107, Cys-76/Cys-93, Cys-78/Cys-95, and Cys-82/Cys-97.

The protein belongs to the resistin/FIZZ family. Monomer. Highest levels in adipose tissue.

The protein resides in the secreted. Functionally, probable hormone. Plays a role in pulmonary vascular remodeling. This Mus musculus (Mouse) protein is Resistin-like alpha (Retnla).